A 565-amino-acid chain; its full sequence is Ubiquitin carboxyl-terminal hydrolase 21 (565 aa).

A compositionally biased stretch (basic and acidic residues) spans 1-14 (MPQASEHRLGRTRE). The segment at 1–103 (MPQASEHRLG…PPPTVALPLP (103 aa)) is disordered. Over residues 48–57 (MLRPLPPRPG) the composition is skewed to pro residues. A compositionally biased stretch (basic and acidic residues) spans 58–70 (LPDERLKKLELGR). A Nuclear export signal motif is present at residues 134-152 (ELGAALSRLALRPEPPTLR). One can recognise a USP domain in the interval 212 to 558 (VGLRNLGNTC…EGYVLFYQLM (347 aa)). Residue C221 is the Nucleophile of the active site. Residues C384, C387, C437, and C440 each coordinate Zn(2+). The active-site Proton acceptor is H518.

The protein belongs to the peptidase C19 family. USP21 subfamily. In terms of assembly, interacts with BEND3. In terms of tissue distribution, highly expressed in heart, pancreas and skeletal muscle. Also expressed in brain, placenta, liver and kidney, and at very low level in lung.

It localises to the cytoplasm. The protein resides in the nucleus. The catalysed reaction is Thiol-dependent hydrolysis of ester, thioester, amide, peptide and isopeptide bonds formed by the C-terminal Gly of ubiquitin (a 76-residue protein attached to proteins as an intracellular targeting signal).. Deubiquitinates histone H2A, a specific tag for epigenetic transcriptional repression, thereby acting as a coactivator. Deubiquitination of histone H2A releaves the repression of di- and trimethylation of histone H3 at 'Lys-4', resulting in regulation of transcriptional initiation. Regulates gene expression via histone H2A deubiquitination. Deubiquitinates BAZ2A/TIP5 leading to its stabilization. Also capable of removing NEDD8 from NEDD8 conjugates but has no effect on Sentrin-1 conjugates. Also acts as a negative regulator of the ribosome quality control (RQC) by mediating deubiquitination of 40S ribosomal proteins RPS10/eS10 and RPS20/uS10, thereby antagonizing ZNF598-mediated 40S ubiquitination. The polypeptide is Ubiquitin carboxyl-terminal hydrolase 21 (Homo sapiens (Human)).